The primary structure comprises 200 residues: Putative HTH-type transcriptional regulator YhjB (200 aa).

The 66-residue stretch at 135–200 (DIKDLKSLSA…QAAMMLNISS (66 aa)) folds into the HTH luxR-type domain. Positions 159–178 (NKEIGRALNISTGTVKAHLE) form a DNA-binding region, H-T-H motif.

This chain is Putative HTH-type transcriptional regulator YhjB (yhjB), found in Escherichia coli (strain K12).